Reading from the N-terminus, the 122-residue chain is MIQMQTLLDVADNSGAKKLFCIKVLGGSKRRYAGIGDIIVASVKEALPNSKVKKGDVVKAVVVRTAKAVGRPDGSYIRFDTNSGVVINNAKEPVGTRIFGPVARELRAKKFMKIISLAPEVL.

The protein belongs to the universal ribosomal protein uL14 family. As to quaternary structure, part of the 50S ribosomal subunit. Forms a cluster with proteins L3 and L19. In the 70S ribosome, L14 and L19 interact and together make contacts with the 16S rRNA in bridges B5 and B8.

Functionally, binds to 23S rRNA. Forms part of two intersubunit bridges in the 70S ribosome. The chain is Large ribosomal subunit protein uL14 from Citrifermentans bemidjiense (strain ATCC BAA-1014 / DSM 16622 / JCM 12645 / Bem) (Geobacter bemidjiensis).